The sequence spans 483 residues: Protein nucleotidyltransferase YdiU (483 aa).

Positions 87, 89, 90, 110, 122, 123, 173, and 180 each coordinate ATP. Asp-249 serves as the catalytic Proton acceptor. Residues Asn-250 and Asp-259 each coordinate Mg(2+). An ATP-binding site is contributed by Asp-259.

It belongs to the SELO family. Mg(2+) is required as a cofactor. Requires Mn(2+) as cofactor.

The enzyme catalyses L-seryl-[protein] + ATP = 3-O-(5'-adenylyl)-L-seryl-[protein] + diphosphate. The catalysed reaction is L-threonyl-[protein] + ATP = 3-O-(5'-adenylyl)-L-threonyl-[protein] + diphosphate. It catalyses the reaction L-tyrosyl-[protein] + ATP = O-(5'-adenylyl)-L-tyrosyl-[protein] + diphosphate. It carries out the reaction L-histidyl-[protein] + UTP = N(tele)-(5'-uridylyl)-L-histidyl-[protein] + diphosphate. The enzyme catalyses L-seryl-[protein] + UTP = O-(5'-uridylyl)-L-seryl-[protein] + diphosphate. The catalysed reaction is L-tyrosyl-[protein] + UTP = O-(5'-uridylyl)-L-tyrosyl-[protein] + diphosphate. Its function is as follows. Nucleotidyltransferase involved in the post-translational modification of proteins. It can catalyze the addition of adenosine monophosphate (AMP) or uridine monophosphate (UMP) to a protein, resulting in modifications known as AMPylation and UMPylation. In Yersinia pseudotuberculosis serotype O:1b (strain IP 31758), this protein is Protein nucleotidyltransferase YdiU.